The chain runs to 332 residues: tRNA uridine(34) hydroxylase (332 aa).

Residues 127–221 (SDPETVLIDT…YLEEVPKEKS (95 aa)) enclose the Rhodanese domain. The active-site Cysteine persulfide intermediate is Cys181. The interval 308 to 332 (AKKLAQLNKQKKQQAKEAARKKAQQ) is disordered. The segment covering 321–332 (QAKEAARKKAQQ) has biased composition (basic and acidic residues).

It belongs to the TrhO family.

The catalysed reaction is uridine(34) in tRNA + AH2 + O2 = 5-hydroxyuridine(34) in tRNA + A + H2O. In terms of biological role, catalyzes oxygen-dependent 5-hydroxyuridine (ho5U) modification at position 34 in tRNAs. This chain is tRNA uridine(34) hydroxylase, found in Francisella tularensis subsp. tularensis (strain FSC 198).